A 157-amino-acid chain; its full sequence is 2-C-methyl-D-erythritol 2,4-cyclodiphosphate synthase (157 aa).

Residues Asp8 and His10 each contribute to the a divalent metal cation site. 4-CDP-2-C-methyl-D-erythritol 2-phosphate contacts are provided by residues 8–10 and 34–35; these read DVH and HS. His42 contributes to the a divalent metal cation binding site. 4-CDP-2-C-methyl-D-erythritol 2-phosphate contacts are provided by residues 56–58, 61–65, 100–106, 132–135, Phe139, and Arg142; these read DIG, FPDTD, AQAPKMA, and TTTE.

The protein belongs to the IspF family. In terms of assembly, homotrimer. A divalent metal cation serves as cofactor.

The catalysed reaction is 4-CDP-2-C-methyl-D-erythritol 2-phosphate = 2-C-methyl-D-erythritol 2,4-cyclic diphosphate + CMP. It participates in isoprenoid biosynthesis; isopentenyl diphosphate biosynthesis via DXP pathway; isopentenyl diphosphate from 1-deoxy-D-xylulose 5-phosphate: step 4/6. Involved in the biosynthesis of isopentenyl diphosphate (IPP) and dimethylallyl diphosphate (DMAPP), two major building blocks of isoprenoid compounds. Catalyzes the conversion of 4-diphosphocytidyl-2-C-methyl-D-erythritol 2-phosphate (CDP-ME2P) to 2-C-methyl-D-erythritol 2,4-cyclodiphosphate (ME-CPP) with a corresponding release of cytidine 5-monophosphate (CMP). This is 2-C-methyl-D-erythritol 2,4-cyclodiphosphate synthase from Pseudomonas putida (strain GB-1).